Reading from the N-terminus, the 316-residue chain is Methionyl-tRNA formyltransferase (316 aa).

112-115 (SLLP) is a binding site for (6S)-5,6,7,8-tetrahydrofolate.

Belongs to the Fmt family.

It carries out the reaction L-methionyl-tRNA(fMet) + (6R)-10-formyltetrahydrofolate = N-formyl-L-methionyl-tRNA(fMet) + (6S)-5,6,7,8-tetrahydrofolate + H(+). Attaches a formyl group to the free amino group of methionyl-tRNA(fMet). The formyl group appears to play a dual role in the initiator identity of N-formylmethionyl-tRNA by promoting its recognition by IF2 and preventing the misappropriation of this tRNA by the elongation apparatus. This is Methionyl-tRNA formyltransferase from Psychromonas ingrahamii (strain DSM 17664 / CCUG 51855 / 37).